A 395-amino-acid polypeptide reads, in one-letter code: Sensor protein DltS (395 aa).

Transmembrane regions (helical) follow at residues 9-29 (FVFL…AVSN) and 136-156 (FLIL…SLYL). The 211-residue stretch at 177–387 (DASHELKTPI…RLEVQLPIDG (211 aa)) folds into the Histidine kinase domain. Residue H180 is modified to Phosphohistidine; by autocatalysis.

The protein resides in the cell membrane. It carries out the reaction ATP + protein L-histidine = ADP + protein N-phospho-L-histidine.. Member of the two-component regulatory system DltS/DltR. Regulates the expression of the dlt operon. Probably phosphorylates DltR. The polypeptide is Sensor protein DltS (dltS) (Streptococcus agalactiae serotype III (strain NEM316)).